The following is a 213-amino-acid chain: Uracil phosphoribosyltransferase (213 aa).

5-phospho-alpha-D-ribose 1-diphosphate is bound by residues Arg-78, Arg-103, and 131 to 139; that span reads DPMLATGGT. Residues Ile-197 and 202–204 each bind uracil; that span reads GDA. Residue Asp-203 participates in 5-phospho-alpha-D-ribose 1-diphosphate binding.

Belongs to the UPRTase family. Requires Mg(2+) as cofactor.

The catalysed reaction is UMP + diphosphate = 5-phospho-alpha-D-ribose 1-diphosphate + uracil. It participates in pyrimidine metabolism; UMP biosynthesis via salvage pathway; UMP from uracil: step 1/1. Allosterically activated by GTP. Its function is as follows. Catalyzes the conversion of uracil and 5-phospho-alpha-D-ribose 1-diphosphate (PRPP) to UMP and diphosphate. The sequence is that of Uracil phosphoribosyltransferase from Bifidobacterium longum subsp. infantis (strain ATCC 15697 / DSM 20088 / JCM 1222 / NCTC 11817 / S12).